The chain runs to 117 residues: Ig heavy chain V region RF (117 aa).

An N-terminal signal peptide occupies residues 1–19; the sequence is MNFGLRLIFLVLVLKGVLC. A framework-1 region spans residues 20 to 49; it reads DVKLVESGGGLVKLGGSLKLSCAASGFTFS. Residues Cys41 and Cys115 are joined by a disulfide bond. The segment at 50 to 54 is complementarity-determining-1; sequence SYYMS. The framework-2 stretch occupies residues 55–68; it reads WVRQTPEKRLELVA. The tract at residues 69-85 is complementarity-determining-2; that stretch reads AINSNGGSTYYPDTVKG. A framework-3 region spans residues 86-117; it reads RFTISRDNAKNTLYLQMSSLKSEDTALYYCAR.

In Mus musculus (Mouse), this protein is Ig heavy chain V region RF.